The primary structure comprises 418 residues: Trans-acting enoyl reductase (418 aa).

The protein belongs to the saccharopine dehydrogenase family. Enoyl reductase subfamily.

Functionally, involved in the reduction of the double bond between C-4 and C-5 during phthiocerol dimycocerosates (DIM A) and glycosylated phenolphthiocerol dimycocerosates (PGL) biosynthesis. The polypeptide is Trans-acting enoyl reductase (Mycobacterium ulcerans (strain Agy99)).